Here is a 1413-residue protein sequence, read N- to C-terminus: DNA-directed RNA polymerase subunit beta' (1413 aa).

Zn(2+) is bound by residues Cys70, Cys72, Cys85, and Cys88. Positions 460, 462, and 464 each coordinate Mg(2+). Zn(2+)-binding residues include Cys814, Cys888, Cys895, and Cys898.

The protein belongs to the RNA polymerase beta' chain family. The RNAP catalytic core consists of 2 alpha, 1 beta, 1 beta' and 1 omega subunit. When a sigma factor is associated with the core the holoenzyme is formed, which can initiate transcription. Mg(2+) serves as cofactor. Zn(2+) is required as a cofactor.

It carries out the reaction RNA(n) + a ribonucleoside 5'-triphosphate = RNA(n+1) + diphosphate. In terms of biological role, DNA-dependent RNA polymerase catalyzes the transcription of DNA into RNA using the four ribonucleoside triphosphates as substrates. The polypeptide is DNA-directed RNA polymerase subunit beta' (Bordetella avium (strain 197N)).